The sequence spans 181 residues: Inner membrane-spanning protein YciB (181 aa).

The next 5 helical transmembrane spans lie at 3–23, 54–74, 81–101, 119–139, and 149–169; these read LLFD…FGIY, SLAI…PWFI, IYWL…KPLI, LNLA…YVAY, and FKLF…AFYL.

It belongs to the YciB family.

It is found in the cell inner membrane. Its function is as follows. Plays a role in cell envelope biogenesis, maintenance of cell envelope integrity and membrane homeostasis. The chain is Inner membrane-spanning protein YciB from Legionella pneumophila subsp. pneumophila (strain Philadelphia 1 / ATCC 33152 / DSM 7513).